Reading from the N-terminus, the 663-residue chain is Transmembrane 9 superfamily member 2 (663 aa).

Positions 1–28 (MSSRPPASLPARGPRLLLLSLLLLGTVP) are cleaved as a signal peptide. The Lumenal segment spans residues 29-300 (GPRPGSAFYL…LESMPHTHIQ (272 aa)). The chain crosses the membrane as a helical span at residues 301-321 (WFSIMNSLVIVLFLSGMVAMI). The Cytoplasmic portion of the chain corresponds to 322–374 (MLRTLHKDIARYNQMDSTEDAQEEFGWKLVHGDIFRPPRKGMLLSVFLGSGTQ). A helical membrane pass occupies residues 375 to 395 (ILIMTFVTLFFACLGFLSPAN). At 396-398 (RGA) the chain is on the lumenal side. Residues 399 to 419 (LMTCAVVLWVLLGTPAGYVAA) form a helical membrane-spanning segment. The Cytoplasmic portion of the chain corresponds to 420–437 (RFYKSFGGEKWKTNVLLT). The chain crosses the membrane as a helical span at residues 438–458 (SFLCPGIVFADFFIMNLILWG). Over 459–466 (EGSSAAIP) the chain is Lumenal. Residues 467-487 (FGTLVAILALWFCISVPLTFI) form a helical membrane-spanning segment. The Cytoplasmic segment spans residues 488–522 (GAYFGFKKNAIEHPVRTNQIPRQIPEQSFYTKPLP). The chain crosses the membrane as a helical span at residues 523–543 (GIIMGGILPFGCIFIQLFFIL). Residues 544-554 (NSIWSHQMYYM) are Lumenal-facing. Residues 555 to 575 (FGFLFLVFIILVITCSEATIL) traverse the membrane as a helical segment. The Cytoplasmic portion of the chain corresponds to 576-591 (LCYFHLCAEDYHWQWR). A helical transmembrane segment spans residues 592 to 612 (SFLTSGFTAVYFLVYAIHYFF). Residues 613 to 631 (SKLQITGTASTILYFGYTM) lie on the Lumenal side of the membrane. The helical transmembrane segment at 632–652 (IMVLIFFLFTGTIGFFACFWF) threads the bilayer. Residues 653–663 (VTKIYSVVKVD) are Cytoplasmic-facing.

Belongs to the nonaspanin (TM9SF) (TC 9.A.2) family.

The protein resides in the endosome membrane. It localises to the golgi outpost. It is found in the cytoplasm. Its subcellular location is the cytoskeleton. The protein localises to the microtubule organizing center. Functionally, in the intracellular compartments, may function as a channel or small molecule transporter. In Rattus norvegicus (Rat), this protein is Transmembrane 9 superfamily member 2 (Tm9sf2).